Here is a 344-residue protein sequence, read N- to C-terminus: Biotin synthase (344 aa).

Residues 40 to 267 enclose the Radical SAM core domain; it reads AEVQVSTLLS…KSMVRLSAGR (228 aa). The [4Fe-4S] cluster site is built by C55, C59, and C62. [2Fe-2S] cluster-binding residues include C99, C130, C190, and R262.

This sequence belongs to the radical SAM superfamily. Biotin synthase family. Homodimer. [4Fe-4S] cluster is required as a cofactor. It depends on [2Fe-2S] cluster as a cofactor.

The enzyme catalyses (4R,5S)-dethiobiotin + (sulfur carrier)-SH + 2 reduced [2Fe-2S]-[ferredoxin] + 2 S-adenosyl-L-methionine = (sulfur carrier)-H + biotin + 2 5'-deoxyadenosine + 2 L-methionine + 2 oxidized [2Fe-2S]-[ferredoxin]. Its pathway is cofactor biosynthesis; biotin biosynthesis; biotin from 7,8-diaminononanoate: step 2/2. Functionally, catalyzes the conversion of dethiobiotin (DTB) to biotin by the insertion of a sulfur atom into dethiobiotin via a radical-based mechanism. This is Biotin synthase from Xanthomonas oryzae pv. oryzae (strain PXO99A).